A 317-amino-acid polypeptide reads, in one-letter code: Nucleosome assembly protein 1;4 (317 aa).

The short motif at 52 to 67 (LSPKVTKRVLFLKDIQ) is the Nuclear export signal element. Positions 214–219 (KKKTKK) match the Nuclear localization signal motif. Residues 297 to 317 (ALVDEDDSDDNDDDDNDEKSD) are disordered. The span at 298–317 (LVDEDDSDDNDDDDNDEKSD) shows a compositional bias: acidic residues.

This sequence belongs to the nucleosome assembly protein (NAP) family. Can form homomeric and heteromeric protein complexes with NAP1;1, NAP1;2 and NAP1;3. Binds histone H2A. In terms of tissue distribution, expressed in the root segment covering the apical end of the differentiation zone, the elongation zone of the root and the mature pollen within the anthers of open flowers.

Its subcellular location is the nucleus. The protein resides in the cytoplasm. Its function is as follows. May modulate chromatin structure by regulation of nucleosome assembly/disassembly. In Arabidopsis thaliana (Mouse-ear cress), this protein is Nucleosome assembly protein 1;4 (NAP1;4).